The chain runs to 176 residues: Large ribosomal subunit protein uL6 (176 aa).

This sequence belongs to the universal ribosomal protein uL6 family. As to quaternary structure, part of the 50S ribosomal subunit.

This protein binds to the 23S rRNA, and is important in its secondary structure. It is located near the subunit interface in the base of the L7/L12 stalk, and near the tRNA binding site of the peptidyltransferase center. The chain is Large ribosomal subunit protein uL6 from Lactobacillus gasseri (strain ATCC 33323 / DSM 20243 / BCRC 14619 / CIP 102991 / JCM 1131 / KCTC 3163 / NCIMB 11718 / NCTC 13722 / AM63).